The chain runs to 424 residues: Tol-Pal system protein TolB (424 aa).

A signal peptide spans 1 to 24 (MNKARAIARWISFLLLIAAGQVCA).

Belongs to the TolB family. The Tol-Pal system is composed of five core proteins: the inner membrane proteins TolA, TolQ and TolR, the periplasmic protein TolB and the outer membrane protein Pal. They form a network linking the inner and outer membranes and the peptidoglycan layer.

Its subcellular location is the periplasm. Part of the Tol-Pal system, which plays a role in outer membrane invagination during cell division and is important for maintaining outer membrane integrity. This chain is Tol-Pal system protein TolB, found in Methylococcus capsulatus (strain ATCC 33009 / NCIMB 11132 / Bath).